A 680-amino-acid polypeptide reads, in one-letter code: DNA-directed RNA polymerase subunit beta' (680 aa).

Residues C69, C71, C87, and C90 each contribute to the Zn(2+) site. Mg(2+)-binding residues include D489, D491, and D493.

It belongs to the RNA polymerase beta' chain family. RpoC1 subfamily. As to quaternary structure, in plastids the minimal PEP RNA polymerase catalytic core is composed of four subunits: alpha, beta, beta', and beta''. When a (nuclear-encoded) sigma factor is associated with the core the holoenzyme is formed, which can initiate transcription. The cofactor is Mg(2+). It depends on Zn(2+) as a cofactor.

Its subcellular location is the plastid. The protein localises to the chloroplast. The catalysed reaction is RNA(n) + a ribonucleoside 5'-triphosphate = RNA(n+1) + diphosphate. In terms of biological role, DNA-dependent RNA polymerase catalyzes the transcription of DNA into RNA using the four ribonucleoside triphosphates as substrates. The polypeptide is DNA-directed RNA polymerase subunit beta' (Aethionema grandiflorum (Persian stone-cress)).